Consider the following 280-residue polypeptide: MKIDSTTKVFGLIGHPVKHSLSPLIHNSSFEKLNFNGVYVVFDVAPELLENAVKGLKALGIKGFNVTVPHKESVMNYLDFVTEEAEKIGAVNTVVNENGILKGYNTDVQGFIDSLKELKEDVRGRKAFVLGAGGASKAICFALAREGVESIVIANRTLNKAKALAEYIREEFKMKCDYCSIEEVEKFNEIDILINTTSVGMHPEVGNSPVSEEVVAKANFVYDLIYNPSETLFLKYARKNGVKSANGLSMLVNQASYAFYLWTGEFFDKDFVYEKIRGEM.

Shikimate is bound by residues 20–22 (SLS) and threonine 67. The Proton acceptor role is filled by lysine 71. Residue glutamate 83 participates in NADP(+) binding. 2 residues coordinate shikimate: asparagine 92 and aspartate 107. NADP(+) contacts are provided by residues 131–135 (GAGGA), 155–160 (NRTLNK), and leucine 224. Tyrosine 226 is a binding site for shikimate. Glycine 247 is an NADP(+) binding site.

Belongs to the shikimate dehydrogenase family. In terms of assembly, homodimer.

It catalyses the reaction shikimate + NADP(+) = 3-dehydroshikimate + NADPH + H(+). The protein operates within metabolic intermediate biosynthesis; chorismate biosynthesis; chorismate from D-erythrose 4-phosphate and phosphoenolpyruvate: step 4/7. Functionally, involved in the biosynthesis of the chorismate, which leads to the biosynthesis of aromatic amino acids. Catalyzes the reversible NADPH linked reduction of 3-dehydroshikimate (DHSA) to yield shikimate (SA). This is Shikimate dehydrogenase (NADP(+)) from Caldanaerobacter subterraneus subsp. tengcongensis (strain DSM 15242 / JCM 11007 / NBRC 100824 / MB4) (Thermoanaerobacter tengcongensis).